We begin with the raw amino-acid sequence, 419 residues long: Histidine--tRNA ligase (419 aa).

It belongs to the class-II aminoacyl-tRNA synthetase family.

The protein localises to the cytoplasm. The enzyme catalyses tRNA(His) + L-histidine + ATP = L-histidyl-tRNA(His) + AMP + diphosphate + H(+). The polypeptide is Histidine--tRNA ligase (Pyrobaculum arsenaticum (strain DSM 13514 / JCM 11321 / PZ6)).